A 247-amino-acid chain; its full sequence is MADTTPNGPQGAGAVQFMMTNKLDTAMWLSRLFTVYCSALFVLPLLGLHEAASFYQRALLANALTSALRLHQRLPHFQLSRAFLAQALLEDSCHYLLYSLIFVNSYPVTMSIFPVLLFSLLHAATYTKKVLDAKGSNSLPLLRSFLDKLSTNQQNILKFIACNEIFLMPATVFMLFSGQGSLLQPFIYYRFLTLRYSSRRNPYCRNLFNELRIVVEHIIMKPSCPLFVRRLCLQSIAFISRLAPTVA.

N-acetylalanine is present on A2. Topologically, residues 2-31 (ADTTPNGPQGAGAVQFMMTNKLDTAMWLSR) are lumenal. A helical membrane pass occupies residues 32–52 (LFTVYCSALFVLPLLGLHEAA). Topologically, residues 53–100 (SFYQRALLANALTSALRLHQRLPHFQLSRAFLAQALLEDSCHYLLYSL) are cytoplasmic. A helical transmembrane segment spans residues 101–121 (IFVNSYPVTMSIFPVLLFSLL). At 122–155 (HAATYTKKVLDAKGSNSLPLLRSFLDKLSTNQQN) the chain is on the lumenal side. The chain crosses the membrane as a helical span at residues 156 to 176 (ILKFIACNEIFLMPATVFMLF). Topologically, residues 177-247 (SGQGSLLQPF…FISRLAPTVA (71 aa)) are cytoplasmic.

This sequence belongs to the PER33/POM33 family. Interacts with EIF2AK3. Interacts with RTN1, RTN2, RTN3, RTN4 and ARL6IP1. Interacts with RNF5. Interacts with RNF26. Interacts with PKD2.

It localises to the endoplasmic reticulum membrane. Its subcellular location is the melanosome. It is found in the nucleus envelope. Its function is as follows. Acts as a regulator of the tubular endoplasmic reticulum (ER) network by modulating intracellular calcium homeostasis. Mechanistically, stimulates PKD2 calcium-dependent activity. Suppresses the RTN3/4-induced formation of the ER tubules. Positively regulates PERK-mediated and IRE1-mediated unfolded protein response signaling. Plays an essential role in VEGF-mediated release of Ca(2+) from ER stores during angiogenesis. Also plays a role in the modulation of innate immune signaling through the cGAS-STING pathway by interacting with RNF26. Participates in lipid metabolism by acting as a downstream effector of the pyruvate kinase/PKM. Forms a complex with RNF5 to facilitate polyubiquitination and subsequent degradation of SCAP on the ER membrane. The chain is Transmembrane protein 33 (Tmem33) from Mus musculus (Mouse).